A 433-amino-acid polypeptide reads, in one-letter code: Trigger factor (433 aa).

One can recognise a PPIase FKBP-type domain in the interval 161–246 (EDRATIDFTG…LKKVEERELP (86 aa)).

Belongs to the FKBP-type PPIase family. Tig subfamily.

It localises to the cytoplasm. The catalysed reaction is [protein]-peptidylproline (omega=180) = [protein]-peptidylproline (omega=0). Involved in protein export. Acts as a chaperone by maintaining the newly synthesized protein in an open conformation. Functions as a peptidyl-prolyl cis-trans isomerase. The protein is Trigger factor of Edwardsiella ictaluri (strain 93-146).